We begin with the raw amino-acid sequence, 633 residues long: tRNA uridine 5-carboxymethylaminomethyl modification enzyme MnmG (633 aa).

FAD-binding positions include 15-20 (GAGHAG), Ile127, and Ser182. 276 to 290 (GPRYCPSIEDKIVRF) contacts NAD(+). Gln373 lines the FAD pocket.

The protein belongs to the MnmG family. In terms of assembly, homodimer. Heterotetramer of two MnmE and two MnmG subunits. It depends on FAD as a cofactor.

It is found in the cytoplasm. NAD-binding protein involved in the addition of a carboxymethylaminomethyl (cmnm) group at the wobble position (U34) of certain tRNAs, forming tRNA-cmnm(5)s(2)U34. This chain is tRNA uridine 5-carboxymethylaminomethyl modification enzyme MnmG, found in Streptococcus agalactiae serotype III (strain NEM316).